The primary structure comprises 100 residues: Pregnancy-associated protein bPAP (100 aa).

Residues 1-40 form a disordered region; the sequence is DSELAGPRGARGPHGLSGPHGLSGLXGPXGYTGPIGMXGL. Low complexity predominate over residues 13–29; that stretch reads PHGLSGPHGLSGLXGPX.

Detected at high levels in the urine of pregnant females (at protein level) and at far lower levels in the urine of nonpregnant females.

This is Pregnancy-associated protein bPAP from Bos taurus (Bovine).